A 683-amino-acid polypeptide reads, in one-letter code: UvrABC system protein B (683 aa).

The disordered stretch occupies residues 1–29 (MTDTGPLQPDRPDLDRPLSVDAPFEPAGD). A Helicase ATP-binding domain is found at 39–417 (AGFESGAEKQ…PGDYERDHSE (379 aa)). An ATP-binding site is contributed by 52–59 (GVTGSGKT). The Beta-hairpin motif lies at 105 to 128 (YYDYYQPEAYVEQTDTYIDKDMSI). A Helicase C-terminal domain is found at 442–604 (QVEDLIERIQ…EPRTIEKPVS (163 aa)). Residues 587–603 (EFNAEHGHEPRTIEKPV) show a composition bias toward basic and acidic residues. Residues 587 to 620 (EFNAEHGHEPRTIEKPVSETNLPGSSTDTDGVAD) form a disordered region. Polar residues predominate over residues 604 to 615 (SETNLPGSSTDT). The UVR domain maps to 630 to 665 (EQLIERLETRMQEAADNLEFELAADIRDRIRELRET).

This sequence belongs to the UvrB family. Forms a heterotetramer with UvrA during the search for lesions. Interacts with UvrC in an incision complex.

The protein localises to the cytoplasm. The UvrABC repair system catalyzes the recognition and processing of DNA lesions. A damage recognition complex composed of 2 UvrA and 2 UvrB subunits scans DNA for abnormalities. Upon binding of the UvrA(2)B(2) complex to a putative damaged site, the DNA wraps around one UvrB monomer. DNA wrap is dependent on ATP binding by UvrB and probably causes local melting of the DNA helix, facilitating insertion of UvrB beta-hairpin between the DNA strands. Then UvrB probes one DNA strand for the presence of a lesion. If a lesion is found the UvrA subunits dissociate and the UvrB-DNA preincision complex is formed. This complex is subsequently bound by UvrC and the second UvrB is released. If no lesion is found, the DNA wraps around the other UvrB subunit that will check the other stand for damage. This is UvrABC system protein B from Natronomonas pharaonis (strain ATCC 35678 / DSM 2160 / CIP 103997 / JCM 8858 / NBRC 14720 / NCIMB 2260 / Gabara) (Halobacterium pharaonis).